Reading from the N-terminus, the 135-residue chain is Large ribosomal subunit protein uL16 (135 aa).

This sequence belongs to the universal ribosomal protein uL16 family. Part of the 50S ribosomal subunit.

Binds 23S rRNA and is also seen to make contacts with the A and possibly P site tRNAs. In Desulforapulum autotrophicum (strain ATCC 43914 / DSM 3382 / VKM B-1955 / HRM2) (Desulfobacterium autotrophicum), this protein is Large ribosomal subunit protein uL16.